We begin with the raw amino-acid sequence, 101 residues long: Ascorbate-specific PTS system EIIB component (101 aa).

Residues 3–96 (VRILAVCGNG…KLLEVIKAHF (94 aa)) enclose the PTS EIIB type-2 domain. C9 (phosphocysteine intermediate) is an active-site residue. A Phosphocysteine modification is found at C9.

It is found in the cytoplasm. The catalysed reaction is N(pros)-phospho-L-histidyl-[protein] + L-ascorbate(out) = L-ascorbate 6-phosphate(in) + L-histidyl-[protein]. In terms of biological role, the phosphoenolpyruvate-dependent sugar phosphotransferase system (sugar PTS), a major carbohydrate active transport system, catalyzes the phosphorylation of incoming sugar substrates concomitantly with their translocation across the cell membrane. The enzyme II UlaABC PTS system is involved in ascorbate transport. This Escherichia coli O6:H1 (strain CFT073 / ATCC 700928 / UPEC) protein is Ascorbate-specific PTS system EIIB component (ulaB).